The sequence spans 444 residues: Acyl-CoA 6-desaturase (444 aa).

Positions 1 to 21 are disordered; that stretch reads MGKGGNQGEGSTERQAPMPTF. The Cytoplasmic portion of the chain corresponds to 1-130; sequence MGKGGNQGEG…EDMNLFKTNH (130 aa). The 78-residue stretch at 18 to 95 folds into the Cytochrome b5 heme-binding domain; it reads MPTFRWEEIQ…LKPLLIGELA (78 aa). Residues 131 to 151 traverse the membrane as a helical segment; the sequence is LFFFLLLSHIIVMESLAWFIL. Residue serine 152 is a topological domain, lumenal. A helical transmembrane segment spans residues 153–173; the sequence is YFGTGWIPTLVTAFVLATSQA. Residues 174 to 264 lie on the Cytoplasmic side of the membrane; sequence QAGWLQHDYG…KYLPYNHQHE (91 aa). The short motif at 180–184 is the Histidine box-1 element; sequence HDYGH. The Histidine box-2 motif lies at 217-221; that stretch reads HFQHH. A helical transmembrane segment spans residues 265–285; it reads YFFLIGPPLLIPMYFQYQIIM. Topologically, residues 286–305 are lumenal; the sequence is TMISRRDWVDLAWAISYYMR. Residues 306 to 326 form a helical membrane-spanning segment; it reads FFYTYIPFYGILGALVFLNFI. Residues 327 to 444 lie on the Cytoplasmic side of the membrane; the sequence is RFLESHWFVW…ELWLDAYLHK (118 aa). A Histidine box-3 motif is present at residues 382–386; it reads QIEHH.

Belongs to the fatty acid desaturase type 1 family. As to expression, highly expressed in the adrenal gland, liver, brain, and testis, tissues where lipogenesis and steroidogenesis are active. Also detected in lung, heart, and skeletal muscle.

The protein localises to the endoplasmic reticulum membrane. It catalyses the reaction (9Z,12Z)-octadecadienoyl-CoA + 2 Fe(II)-[cytochrome b5] + O2 + 2 H(+) = (6Z,9Z,12Z)-octadecatrienoyl-CoA + 2 Fe(III)-[cytochrome b5] + 2 H2O. It carries out the reaction (9Z,12Z,15Z)-octadecatrienoyl-CoA + 2 Fe(II)-[cytochrome b5] + O2 + 2 H(+) = (6Z,9Z,12Z,15Z)-octadecatetraenoyl-CoA + 2 Fe(III)-[cytochrome b5] + 2 H2O. The enzyme catalyses (9Z,12Z,15Z,18Z,21Z)-tetracosapentaenoyl-CoA + 2 Fe(II)-[cytochrome b5] + O2 + 2 H(+) = (6Z,9Z,12Z,15Z,18Z,21Z)-tetracosahexaenoyl-CoA + 2 Fe(III)-[cytochrome b5] + 2 H2O. The catalysed reaction is (11E)-octadecenoyl-CoA + 2 Fe(II)-[cytochrome b5] + O2 + 2 H(+) = (6Z,11E)-octadecadienoyl-CoA + 2 Fe(III)-[cytochrome b5] + 2 H2O. It catalyses the reaction (11Z,14Z)-eicosadienoyl-CoA + 2 Fe(II)-[cytochrome b5] + O2 + 2 H(+) = (8Z,11Z,14Z)-eicosatrienoyl-CoA + 2 Fe(III)-[cytochrome b5] + 2 H2O. It carries out the reaction (11Z,14Z,17Z)-eicosatrienoyl-CoA + 2 Fe(II)-[cytochrome b5] + O2 + 2 H(+) = (8Z,11Z,14Z,17Z)-eicosatetraenoyl-CoA + 2 Fe(III)-[cytochrome b5] + 2 H2O. It functions in the pathway lipid metabolism; polyunsaturated fatty acid biosynthesis. Involved in the biosynthesis of highly unsaturated fatty acids (HUFA) from the essential polyunsaturated fatty acids (PUFA) linoleic acid (LA) (18:2n-6) and alpha-linolenic acid (ALA) (18:3n-3) precursors, acting as a fatty acyl-coenzyme A (CoA) desaturase that introduces a cis double bond at carbon 6 of the fatty acyl chain. Catalyzes the first and rate limiting step in this pathway which is the desaturation of LA (18:2n-6) and ALA (18:3n-3) into gamma-linoleate (GLA) (18:3n-6) and stearidonate (18:4n-3), respectively. Subsequently, in the biosynthetic pathway of HUFA n-3 series, it desaturates tetracosapentaenoate (24:5n-3) to tetracosahexaenoate (24:6n-3), which is then converted to docosahexaenoate (DHA)(22:6n-3), an important lipid for nervous system function. It can also desaturate (11E)-octadecenoate (trans-vaccenoate) at carbon 6 generating (6Z,11E)-octadecadienoate. In addition to Delta-6 activity, this enzyme exhibits Delta-8 activity with slight biases toward n-3 fatty acyl-CoA substrates. The protein is Acyl-CoA 6-desaturase of Mus musculus (Mouse).